The sequence spans 372 residues: Cuticle collagen dpy-10 (372 aa).

The N-terminal stretch at 1–45 (MKNNAKEDYRTFSLTTNYSRQMIYRCVTGLQIGFSLFSFIIVCVA) is a signal peptide. Triple-helical region regions lie at residues 144–173 (GPPGPRGSSGTPGKPGLPGNAGKPGMPGTT), 195–251 (GPPG…KGPT), and 259–324 (GPPG…PGVC). The interval 144 to 372 (GPPGPRGSSG…RAGYQGYGRK (229 aa)) is disordered. Residues 185–196 (EPPPCRPCPKGP) show a composition bias toward pro residues. Residues 197–208 (PGIKGWPGFPGD) are compositionally biased toward low complexity. 2 stretches are compositionally biased toward gly residues: residues 237–246 (GYRGGPGAPG) and 283–292 (GLTGGQGERG). The segment covering 293-303 (WPGVSGESGEP) has biased composition (low complexity). Positions 353–363 (GYGGSRGGGDR) are enriched in gly residues.

Belongs to the cuticular collagen family. As to quaternary structure, collagen polypeptide chains are complexed within the cuticle by disulfide bonds and other types of covalent cross-links.

Nematode cuticles are composed largely of collagen-like proteins. The cuticle functions both as an exoskeleton and as a barrier to protect the worm from its environment. The polypeptide is Cuticle collagen dpy-10 (dpy-10) (Caenorhabditis elegans).